The following is a 336-amino-acid chain: Mitochondrial thiamine diphosphate carrier 2 (336 aa).

6 helical membrane passes run 11–27 (RRAL…GGIS), 88–105 (VPAL…FTVL), 127–150 (YLSY…FDLL), 182–199 (LYSG…YAGL), 230–246 (SVSS…AGTF), and 303–322 (GLFP…FVAY). Solcar repeat units lie at residues 11–111 (RRAL…LKTF), 124–210 (LSPY…FKRS), and 231–328 (VSSF…ISDW).

Belongs to the mitochondrial carrier (TC 2.A.29) family. In terms of tissue distribution, ubiquitous.

The protein localises to the mitochondrion inner membrane. Functionally, mitochondrial transporter that mediates uptake of thiamine diphosphate (ThDP) into mitochondria. This chain is Mitochondrial thiamine diphosphate carrier 2, found in Zea mays (Maize).